The primary structure comprises 256 residues: Ribonuclease HII (256 aa).

The 185-residue stretch at 72 to 256 folds into the RNase H type-2 domain; that stretch reads QYIAGMDEVG…SFNPVPKYLN (185 aa). A divalent metal cation contacts are provided by Asp78, Glu79, and Asp170.

This sequence belongs to the RNase HII family. The cofactor is Mn(2+). Requires Mg(2+) as cofactor.

It is found in the cytoplasm. The enzyme catalyses Endonucleolytic cleavage to 5'-phosphomonoester.. Functionally, endonuclease that specifically degrades the RNA of RNA-DNA hybrids. The chain is Ribonuclease HII from Limosilactobacillus reuteri (strain DSM 20016) (Lactobacillus reuteri).